Consider the following 583-residue polypeptide: 2-succinyl-5-enolpyruvyl-6-hydroxy-3-cyclohexene-1-carboxylate synthase (583 aa).

It belongs to the TPP enzyme family. MenD subfamily. In terms of assembly, homodimer. Mg(2+) serves as cofactor. It depends on Mn(2+) as a cofactor. The cofactor is thiamine diphosphate.

It carries out the reaction isochorismate + 2-oxoglutarate + H(+) = 5-enolpyruvoyl-6-hydroxy-2-succinyl-cyclohex-3-ene-1-carboxylate + CO2. Its pathway is quinol/quinone metabolism; 1,4-dihydroxy-2-naphthoate biosynthesis; 1,4-dihydroxy-2-naphthoate from chorismate: step 2/7. It participates in quinol/quinone metabolism; menaquinone biosynthesis. Functionally, catalyzes the thiamine diphosphate-dependent decarboxylation of 2-oxoglutarate and the subsequent addition of the resulting succinic semialdehyde-thiamine pyrophosphate anion to isochorismate to yield 2-succinyl-5-enolpyruvyl-6-hydroxy-3-cyclohexene-1-carboxylate (SEPHCHC). In Chlorobium chlorochromatii (strain CaD3), this protein is 2-succinyl-5-enolpyruvyl-6-hydroxy-3-cyclohexene-1-carboxylate synthase.